Here is a 418-residue protein sequence, read N- to C-terminus: Putative ion-transport protein YfeO (418 aa).

The next 10 membrane-spanning stretches (helical) occupy residues 15 to 37 (PAVA…ASVL), 57 to 79 (LWII…FSQG), 99 to 118 (ALPR…VSLG), 149 to 171 (ILAS…LIFS), 186 to 208 (LFAP…HPHF), 221 to 243 (TDIL…AVWC), 258 to 280 (VLVL…PVSL), 301 to 323 (YFLL…FRGG), 343 to 363 (VPAV…VLVV), and 376 to 398 (VVVP…WLLL).

The protein belongs to the chloride channel (TC 2.A.49) family.

It localises to the cell membrane. This Shigella flexneri protein is Putative ion-transport protein YfeO (yfeO).